Here is a 361-residue protein sequence, read N- to C-terminus: Putative agmatine deiminase (361 aa).

The active-site Amidino-cysteine intermediate is the cysteine 354.

The protein belongs to the agmatine deiminase family.

The catalysed reaction is agmatine + H2O = N-carbamoylputrescine + NH4(+). This chain is Putative agmatine deiminase, found in Streptococcus pneumoniae (strain P1031).